A 72-amino-acid chain; its full sequence is Translation initiation factor IF-1 (72 aa).

In terms of domain architecture, S1-like spans Met1–Lys72.

This sequence belongs to the IF-1 family. In terms of assembly, component of the 30S ribosomal translation pre-initiation complex which assembles on the 30S ribosome in the order IF-2 and IF-3, IF-1 and N-formylmethionyl-tRNA(fMet); mRNA recruitment can occur at any time during PIC assembly.

The protein localises to the cytoplasm. One of the essential components for the initiation of protein synthesis. Stabilizes the binding of IF-2 and IF-3 on the 30S subunit to which N-formylmethionyl-tRNA(fMet) subsequently binds. Helps modulate mRNA selection, yielding the 30S pre-initiation complex (PIC). Upon addition of the 50S ribosomal subunit IF-1, IF-2 and IF-3 are released leaving the mature 70S translation initiation complex. The chain is Translation initiation factor IF-1 from Maricaulis maris (strain MCS10) (Caulobacter maris).